We begin with the raw amino-acid sequence, 356 residues long: Probable dual-specificity RNA methyltransferase RlmN (356 aa).

The active-site Proton acceptor is the E97. One can recognise a Radical SAM core domain in the interval 103-333; it reads YHHGNSVCIS…VTIRREMGSD (231 aa). A disulfide bond links C110 and C338. [4Fe-4S] cluster-binding residues include C117, C121, and C124. S-adenosyl-L-methionine-binding positions include 164 to 165, S196, 219 to 221, and N295; these read GE and SLH. C338 serves as the catalytic S-methylcysteine intermediate.

It belongs to the radical SAM superfamily. RlmN family. Requires [4Fe-4S] cluster as cofactor.

It is found in the cytoplasm. The enzyme catalyses adenosine(2503) in 23S rRNA + 2 reduced [2Fe-2S]-[ferredoxin] + 2 S-adenosyl-L-methionine = 2-methyladenosine(2503) in 23S rRNA + 5'-deoxyadenosine + L-methionine + 2 oxidized [2Fe-2S]-[ferredoxin] + S-adenosyl-L-homocysteine. The catalysed reaction is adenosine(37) in tRNA + 2 reduced [2Fe-2S]-[ferredoxin] + 2 S-adenosyl-L-methionine = 2-methyladenosine(37) in tRNA + 5'-deoxyadenosine + L-methionine + 2 oxidized [2Fe-2S]-[ferredoxin] + S-adenosyl-L-homocysteine. Its function is as follows. Specifically methylates position 2 of adenine 2503 in 23S rRNA and position 2 of adenine 37 in tRNAs. The polypeptide is Probable dual-specificity RNA methyltransferase RlmN (Lachnoclostridium phytofermentans (strain ATCC 700394 / DSM 18823 / ISDg) (Clostridium phytofermentans)).